The sequence spans 1347 residues: MDLLSGTYIFAVLLACVVFHSGAQEKNYTIREEMPENVLIGDLLKDLNLSLIPNKSLTTAMQFKLVYKTGDVPLIRIEEDTGEIFTTGARIDREKLCAGIPRDEHCFYEVEVAILPDEIFRLVKIRFLIEDINDNAPLFPATVINISIPENSAINSKYTLPAAVDPDVGINGVQNYELIKSQNMFGLDVIETPEGDKMPQLIVQKELDREKKDTYVMKVKVEDGGFPQRSSTAILQVSVTDTNDNHPVFKETEIEVSIPENAPVGTSVTQLHATDADIGENAKIHFSFSNLVSNIARRLFHLNATTGLITIKEPLDREETPNHKLLVLASDGGLMPARAMVLVNVTDVNDNVPSIDIRYIVNPVNDTVVLSENIPLNTKIALITVTDKDADHNGRVTCFTDHEIPFRLRPVFSNQFLLETAAYLDYESTKEYAIKLLAADAGKPPLNQSAMLFIKVKDENDNAPVFTQSFVTVSIPENNSPGIQLTKVSATDADSGPNAEINYLLGPDAPPEFSLDRRTGMLTVVKKLDREKEDKYLFTILAKDNGVPPLTSNVTVFVSIIDQNDNSPVFTHNEYNFYVPENLPRHGTVGLITVTDPDYGDNSAVTLSILDENDDFTIDSQTGVIRPNISFDREKQESYTFYVKAEDGGRVSRSSSAKVTINVVDVNDNKPVFIVPPSNYSYELVLPSTNPGTVVFQVIAVDNDTGMNAEVRYSIVGGNTRDLFAIDQETGNITLMEKCDVTDLGLHRVLVKANDLGQPDSLFSVVIVNLFVNESVTNATLINELVRKSIEAPVTPNTEIADVSSPTNDYVKILVAAVAGTITVVVVIFITAVVRCRQAPHLKAAQKNKQNSEWATPNPENRQMIMMKKRKKKKKHSPKNLLLNFVTIEETKADDVDSDGNRVTLDLPIDLEEQTMGKYDWVTTPTTFKPDSPDLARHYKSASPQPAFQIQPETPLNSKHHIIQELPLDNTFVACDSISKCSSSSSDPYSVSDCGYPVTTFEVPVSVHTRPPMKEVVRSCTPMKESTTMEIWIHPQPQRKSEGKVAGKSQRRVTFHLPEGSQESSSDGGLGDHDAGSLTSTSHGLPLGYPQEEYFDRATPSNRTEGDGNSDPESTFIPGLKKAAEITVQPTVEEASDNCTQECLIYGHSDACWMPASLDHSSSLQAQASALCHSPPLSQASTQHHSPPVTQTIALCHSPPVTQTIALCHSPPPIQVSALRHSPPLVQATALHHSPPSAQASALCYSPPLAQAAAISHSSPLPQVIALHRSQAQSSVSLQQGWVQGADGLCSVDQGVQGSATSQFYTMSERLHASDDSIKVIPLTTFTPRQQARPSRGDSPIMEEHPL.

The first 23 residues, 1–23 (MDLLSGTYIFAVLLACVVFHSGA), serve as a signal peptide directing secretion. Residues 24–812 (QEKNYTIREE…VSSPTNDYVK (789 aa)) are Extracellular-facing. Cadherin domains lie at 26–139 (KNYT…APLF), 140–249 (PATV…HPVF), 250–355 (KETE…VPSI), 362–466 (NPVN…APVF), 467–570 (TQSF…SPVF), 571–673 (THNE…KPVF), and 677–795 (PSNY…APVT). N-linked (GlcNAc...) asparagine glycans are attached at residues Asn27, Asn48, and Asn54. A glycan (N-linked (GlcNAc...) asparagine) is linked at Asn344. Residue Asn553 is glycosylated (N-linked (GlcNAc...) asparagine). Asn773 is a glycosylation site (N-linked (GlcNAc...) asparagine). A helical membrane pass occupies residues 813 to 833 (ILVAAVAGTITVVVVIFITAV). Residues 834-1347 (VRCRQAPHLK…DSPIMEEHPL (514 aa)) are Cytoplasmic-facing. Disordered regions lie at residues 1057–1091 (LPEGSQESSSDGGLGDHDAGSLTSTSHGLPLGYPQ), 1097–1116 (RATPSNRTEGDGNSDPESTF), and 1326–1347 (FTPRQQARPSRGDSPIMEEHPL).

Its subcellular location is the cell membrane. Its function is as follows. Potential calcium-dependent cell-adhesion protein. The protein is Protocadherin-11 X-linked (PCDH11X) of Gorilla gorilla gorilla (Western lowland gorilla).